Consider the following 434-residue polypeptide: 5'-deoxyadenosine deaminase (434 aa).

Zn(2+) is bound by residues H63 and H65. The substrate site is built by E92 and H184. H211 contributes to the Zn(2+) binding site. 2 residues coordinate substrate: E214 and D299. Zn(2+) is bound at residue D299.

Belongs to the metallo-dependent hydrolases superfamily. MTA/SAH deaminase family. As to quaternary structure, homotetramer. It depends on Zn(2+) as a cofactor.

It carries out the reaction 5'-deoxyadenosine + H2O + H(+) = 5'-deoxyinosine + NH4(+). It catalyses the reaction S-adenosyl-L-homocysteine + H2O + H(+) = S-inosyl-L-homocysteine + NH4(+). The enzyme catalyses S-methyl-5'-thioadenosine + H2O + H(+) = S-methyl-5'-thioinosine + NH4(+). The catalysed reaction is adenosine + H2O + H(+) = inosine + NH4(+). Its pathway is amino-acid biosynthesis; S-adenosyl-L-methionine biosynthesis. Catalyzes the deamination of three SAM-derived enzymatic products, namely 5'-deoxyadenosine, S-adenosyl-L-homocysteine, and 5'-methylthioadenosine, to produce the inosine analogs. Can also deaminate adenosine. The preferred substrate for this enzyme is 5'-deoxyadenosine, but all these substrates are efficiently deaminated. Likely functions in a S-adenosyl-L-methionine (SAM) recycling pathway from S-adenosyl-L-homocysteine (SAH) produced from SAM-dependent methylation reactions. May also be involved in the recycling of 5'-deoxyadenosine, whereupon the 5'-deoxyribose moiety of 5'-deoxyinosine is further metabolized to deoxyhexoses used for the biosynthesis of aromatic amino acids in methanogens. This chain is 5'-deoxyadenosine deaminase, found in Methanococcoides burtonii (strain DSM 6242 / NBRC 107633 / OCM 468 / ACE-M).